The sequence spans 635 residues: Extracellular metalloproteinase 1 (635 aa).

The N-terminal stretch at 1–19 (MHGLLLAAGLLSLPLHVLA) is a signal peptide. Positions 20-246 (HPQPSTSTSL…VHNVVDYVAH (227 aa)) are excised as a propeptide. A glycan (N-linked (GlcNAc...) asparagine) is linked at Asn-287. His-430 is a Zn(2+) binding site. The active site involves Glu-431. His-434 contributes to the Zn(2+) binding site. Asn-475, Asn-594, and Asn-623 each carry an N-linked (GlcNAc...) asparagine glycan.

The protein belongs to the peptidase M36 family. Zn(2+) serves as cofactor.

Its subcellular location is the secreted. Its function is as follows. Secreted metalloproteinase probably acting as a virulence factor. The chain is Extracellular metalloproteinase 1 (MEP1) from Trichophyton tonsurans (Scalp ringworm fungus).